A 150-amino-acid chain; its full sequence is 15 kDa calcium-binding protein (150 aa).

Residue alanine 1 is modified to N-acetylalanine. EF-hand domains follow at residues 7-42, 43-78, 81-116, and 118-150; these read TDAE…AGKS, FSEE…KMMK, WKKS…RIEP, and MSKE…IKSS. Positions 22, 24, 26, 28, 56, 58, 60, 62, 67, 94, 96, 98, 105, 131, 133, 135, 137, and 142 each coordinate Ca(2+).

The protein resides in the nucleus. Its subcellular location is the cytoplasm. It localises to the cytoskeleton. It is found in the spindle. In terms of biological role, may play an important role in mitosis of sea urchin egg. May function as a Ca(2+)-dependent intracellular modulator of microtubule assembly. The protein is 15 kDa calcium-binding protein of Hemicentrotus pulcherrimus (Sea urchin).